The chain runs to 597 residues: Elongation factor 4 (597 aa).

One can recognise a tr-type G domain in the interval 2–184; the sequence is NNIRNFSIIA…ALIAKVPPPK (183 aa). GTP is bound by residues 14–19 and 131–134; these read DHGKST and NKID.

Belongs to the TRAFAC class translation factor GTPase superfamily. Classic translation factor GTPase family. LepA subfamily.

Its subcellular location is the cell inner membrane. It carries out the reaction GTP + H2O = GDP + phosphate + H(+). Its function is as follows. Required for accurate and efficient protein synthesis under certain stress conditions. May act as a fidelity factor of the translation reaction, by catalyzing a one-codon backward translocation of tRNAs on improperly translocated ribosomes. Back-translocation proceeds from a post-translocation (POST) complex to a pre-translocation (PRE) complex, thus giving elongation factor G a second chance to translocate the tRNAs correctly. Binds to ribosomes in a GTP-dependent manner. The protein is Elongation factor 4 of Herminiimonas arsenicoxydans.